A 1134-amino-acid polypeptide reads, in one-letter code: Phytochrome 1 (1134 aa).

The GAF domain maps to 219–401 (DIGLLCDTVV…VFGLQLNMEA (183 aa)). Residue cysteine 324 coordinates phytochromobilin. Residues 616–687 (VANEMVRLIE…RLLYLALQGD (72 aa)) enclose the PAS 1 domain. Residues 690 to 746 (QNVELKLKTFGGQKDKEAVILVVNACASRDVSDNVVGVCFVGQDVTGQKVVMDKFTR) enclose the PAC domain. A PAS 2 domain is found at 750 to 821 (DYKAIVQNPN…KGQDAVTKFM (72 aa)). The 221-residue stretch at 901–1121 (YIRQEIKNPL…LVSLELPLAQ (221 aa)) folds into the Histidine kinase domain.

This sequence belongs to the phytochrome family. As to quaternary structure, homodimer. In terms of processing, contains one covalently linked phytochromobilin chromophore.

Its function is as follows. Regulatory photoreceptor which exists in two forms that are reversibly interconvertible by light: the Pr form that absorbs maximally in the red region of the spectrum and the Pfr form that absorbs maximally in the far-red region. Photoconversion of Pr to Pfr induces an array of morphogenic responses, whereas reconversion of Pfr to Pr cancels the induction of those responses. Pfr controls the expression of a number of nuclear genes including those encoding the small subunit of ribulose-bisphosphate carboxylase, chlorophyll A/B binding protein, protochlorophyllide reductase, rRNA, etc. It also controls the expression of its own gene(s) in a negative feedback fashion. This chain is Phytochrome 1 (PHY1), found in Selaginella martensii (Martens's spike moss).